Reading from the N-terminus, the 550-residue chain is Endonuclease/exonuclease/phosphatase family domain-containing protein 1 (550 aa).

The region spanning 39–68 (ERLNINTATEEELMTLPGVNRGVAQNIVEY) is the HhH domain. Over residues 194-213 (STNTNGGFTHPSPTSFSVQS) the composition is skewed to polar residues. Residues 194–216 (STNTNGGFTHPSPTSFSVQSDEP) are disordered.

The polypeptide is Endonuclease/exonuclease/phosphatase family domain-containing protein 1 (eepd1) (Danio rerio (Zebrafish)).